The following is a 470-amino-acid chain: Uronate isomerase (470 aa).

Belongs to the metallo-dependent hydrolases superfamily. Uronate isomerase family.

It catalyses the reaction D-glucuronate = D-fructuronate. The enzyme catalyses aldehydo-D-galacturonate = keto-D-tagaturonate. Its pathway is carbohydrate metabolism; pentose and glucuronate interconversion. The polypeptide is Uronate isomerase (Salmonella paratyphi A (strain ATCC 9150 / SARB42)).